Here is a 604-residue protein sequence, read N- to C-terminus: Aspartate--tRNA(Asp/Asn) ligase (604 aa).

Glutamate 187 lines the L-aspartate pocket. The interval 211–214 is aspartate; that stretch reads QQFK. L-aspartate contacts are provided by arginine 233 and histidine 461. 233 to 235 serves as a coordination point for ATP; it reads RDE. Glutamate 495 serves as a coordination point for ATP. Arginine 502 lines the L-aspartate pocket. 547-550 provides a ligand contact to ATP; that stretch reads GLDR.

Belongs to the class-II aminoacyl-tRNA synthetase family. Type 1 subfamily. In terms of assembly, homodimer.

It is found in the cytoplasm. It catalyses the reaction tRNA(Asx) + L-aspartate + ATP = L-aspartyl-tRNA(Asx) + AMP + diphosphate. Functionally, aspartyl-tRNA synthetase with relaxed tRNA specificity since it is able to aspartylate not only its cognate tRNA(Asp) but also tRNA(Asn). Reaction proceeds in two steps: L-aspartate is first activated by ATP to form Asp-AMP and then transferred to the acceptor end of tRNA(Asp/Asn). The protein is Aspartate--tRNA(Asp/Asn) ligase of Chlorobium luteolum (strain DSM 273 / BCRC 81028 / 2530) (Pelodictyon luteolum).